Here is a 197-residue protein sequence, read N- to C-terminus: Mediator of RNA polymerase II transcription subunit 21 (197 aa).

The disordered stretch occupies residues 37–112; the sequence is PPPSVPSAVP…APPRPDSPNT (76 aa). Composition is skewed to low complexity over residues 60 to 70 and 90 to 100; these read PTSGTATNTPG and PQMQQQHQEQP. A coiled-coil region spans residues 140-183; sequence GIKSSEAEQQERIKQLAEELRVVEEERSARRRELRRLGEKVDGL.

It belongs to the Mediator complex subunit 21 family. As to quaternary structure, component of the Mediator complex.

It is found in the nucleus. In terms of biological role, component of the Mediator complex, a coactivator involved in the regulated transcription of nearly all RNA polymerase II-dependent genes. Mediator functions as a bridge to convey information from gene-specific regulatory proteins to the basal RNA polymerase II transcription machinery. Mediator is recruited to promoters by direct interactions with regulatory proteins and serves as a scaffold for the assembly of a functional preinitiation complex with RNA polymerase II and the general transcription factors. In Coccidioides immitis (strain RS) (Valley fever fungus), this protein is Mediator of RNA polymerase II transcription subunit 21 (SRB7).